The following is a 380-amino-acid chain: Cytochrome b (380 aa).

Transmembrane regions (helical) follow at residues 34–54, 78–99, 114–134, and 179–199; these read FGSL…LLAT, WLIR…YLHI, WNTG…GYVL, and FFAL…IHLT. Heme b contacts are provided by His-84 and His-98. Residues His-183 and His-197 each contribute to the heme b site. A ubiquinone is bound at residue His-202. Transmembrane regions (helical) follow at residues 227–247, 289–309, 321–341, and 348–368; these read LKDI…ALFS, LGGV…PFLH, ISQL…WIGS, and FIII…ALFP.

It belongs to the cytochrome b family. As to quaternary structure, the cytochrome bc1 complex contains 11 subunits: 3 respiratory subunits (MT-CYB, CYC1 and UQCRFS1), 2 core proteins (UQCRC1 and UQCRC2) and 6 low-molecular weight proteins (UQCRH/QCR6, UQCRB/QCR7, UQCRQ/QCR8, UQCR10/QCR9, UQCR11/QCR10 and a cleavage product of UQCRFS1). This cytochrome bc1 complex then forms a dimer. The cofactor is heme b.

It localises to the mitochondrion inner membrane. Functionally, component of the ubiquinol-cytochrome c reductase complex (complex III or cytochrome b-c1 complex) that is part of the mitochondrial respiratory chain. The b-c1 complex mediates electron transfer from ubiquinol to cytochrome c. Contributes to the generation of a proton gradient across the mitochondrial membrane that is then used for ATP synthesis. The chain is Cytochrome b (MT-CYB) from Buteo buteo (Eurasian buzzard).